A 242-amino-acid chain; its full sequence is tRNA (guanine-N(1)-)-methyltransferase (242 aa).

S-adenosyl-L-methionine is bound by residues glycine 108 and 127 to 132; that span reads IGDYVL.

The protein belongs to the RNA methyltransferase TrmD family. As to quaternary structure, homodimer.

Its subcellular location is the cytoplasm. It carries out the reaction guanosine(37) in tRNA + S-adenosyl-L-methionine = N(1)-methylguanosine(37) in tRNA + S-adenosyl-L-homocysteine + H(+). Its function is as follows. Specifically methylates guanosine-37 in various tRNAs. In Lactobacillus acidophilus (strain ATCC 700396 / NCK56 / N2 / NCFM), this protein is tRNA (guanine-N(1)-)-methyltransferase.